The primary structure comprises 63 residues: Mu-like prophage FluMu protein gp38 (63 aa).

It to phage Mu protein gp38.

The polypeptide is Mu-like prophage FluMu protein gp38 (Haemophilus influenzae (strain ATCC 51907 / DSM 11121 / KW20 / Rd)).